A 258-amino-acid polypeptide reads, in one-letter code: Tritrans,polycis-undecaprenyl-diphosphate synthase (geranylgeranyl-diphosphate specific) (258 aa).

Asp-37 is an active-site residue. Asp-37 is a Mg(2+) binding site. Residues 38–41, His-54, and 82–84 contribute to the substrate site; these read GNRR and STE. The active-site Proton acceptor is the Asn-85. Substrate contacts are provided by residues Phe-86, Arg-88, Arg-207, and 213 to 215; that span reads RIS. Glu-226 provides a ligand contact to Mg(2+).

Belongs to the UPP synthase family. As to quaternary structure, homodimer. Mg(2+) serves as cofactor.

It carries out the reaction geranylgeranyl diphosphate + 7 isopentenyl diphosphate = tri-trans,hepta-cis-undecaprenyl diphosphate + 7 diphosphate. Functionally, catalyzes the sequential condensation of isopentenyl diphosphate (IPP) with geranylgeranyl diphosphate (GGPP) to yield (2Z,6Z,10Z,14Z,18Z,22Z,26Z,30E,34E,38E)-undecaprenyl diphosphate (tritrans,heptacis-UPP). It is probably the precursor of glycosyl carrier lipids. This Thermoplasma acidophilum (strain ATCC 25905 / DSM 1728 / JCM 9062 / NBRC 15155 / AMRC-C165) protein is Tritrans,polycis-undecaprenyl-diphosphate synthase (geranylgeranyl-diphosphate specific).